Here is an 83-residue protein sequence, read N- to C-terminus: Glutaredoxin 3 (83 aa).

The Glutaredoxin domain occupies Ala2–Lys83. Residues Cys12 and Cys15 are joined by a disulfide bond.

It belongs to the glutaredoxin family. Monomer.

Functionally, the disulfide bond functions as an electron carrier in the glutathione-dependent synthesis of deoxyribonucleotides by the enzyme ribonucleotide reductase. In addition, it is also involved in reducing some disulfides in a coupled system with glutathione reductase. This chain is Glutaredoxin 3 (grxC), found in Escherichia coli O157:H7.